A 430-amino-acid chain; its full sequence is Tol-Pal system protein TolB (430 aa).

Residues 1–26 (MSLMTKLGLRTLVASCLIAVGGAAHA) form the signal peptide.

The protein belongs to the TolB family. In terms of assembly, the Tol-Pal system is composed of five core proteins: the inner membrane proteins TolA, TolQ and TolR, the periplasmic protein TolB and the outer membrane protein Pal. They form a network linking the inner and outer membranes and the peptidoglycan layer.

It is found in the periplasm. In terms of biological role, part of the Tol-Pal system, which plays a role in outer membrane invagination during cell division and is important for maintaining outer membrane integrity. The protein is Tol-Pal system protein TolB of Paraburkholderia phytofirmans (strain DSM 17436 / LMG 22146 / PsJN) (Burkholderia phytofirmans).